Here is a 915-residue protein sequence, read N- to C-terminus: Isoleucine--tRNA ligase (915 aa).

Residues 58-68 (PYANGHLHIGH) carry the 'HIGH' region motif. L-isoleucyl-5'-AMP is bound at residue Glu568. The 'KMSKS' region motif lies at 609–613 (KMSKS). Lys612 lines the ATP pocket. Positions 892, 895, 907, and 910 each coordinate Zn(2+).

It belongs to the class-I aminoacyl-tRNA synthetase family. IleS type 1 subfamily. In terms of assembly, monomer. Requires Zn(2+) as cofactor.

It localises to the cytoplasm. It carries out the reaction tRNA(Ile) + L-isoleucine + ATP = L-isoleucyl-tRNA(Ile) + AMP + diphosphate. Its function is as follows. Catalyzes the attachment of isoleucine to tRNA(Ile). As IleRS can inadvertently accommodate and process structurally similar amino acids such as valine, to avoid such errors it has two additional distinct tRNA(Ile)-dependent editing activities. One activity is designated as 'pretransfer' editing and involves the hydrolysis of activated Val-AMP. The other activity is designated 'posttransfer' editing and involves deacylation of mischarged Val-tRNA(Ile). This Wolinella succinogenes (strain ATCC 29543 / DSM 1740 / CCUG 13145 / JCM 31913 / LMG 7466 / NCTC 11488 / FDC 602W) (Vibrio succinogenes) protein is Isoleucine--tRNA ligase.